We begin with the raw amino-acid sequence, 720 residues long: Catalase-peroxidase (720 aa).

A cross-link (tryptophyl-tyrosyl-methioninium (Trp-Tyr) (with M-248)) is located at residues 94-222; it reads WHAAGTYRIA…LAAVTMGLIY (129 aa). The Proton acceptor role is filled by H95. The segment at residues 222-248 is a cross-link (tryptophyl-tyrosyl-methioninium (Tyr-Met) (with W-94)); that stretch reads YVNPEGVDGNPDPLKTAHDVRVTFARM. H263 lines the heme b pocket.

This sequence belongs to the peroxidase family. Peroxidase/catalase subfamily. Homodimer. It depends on heme b as a cofactor. Post-translationally, formation of the three residue Trp-Tyr-Met cross-link is important for the catalase, but not the peroxidase activity of the enzyme.

It catalyses the reaction H2O2 + AH2 = A + 2 H2O. The catalysed reaction is 2 H2O2 = O2 + 2 H2O. Its function is as follows. Bifunctional enzyme with both catalase and broad-spectrum peroxidase activity. The sequence is that of Catalase-peroxidase from Synechococcus elongatus (strain ATCC 33912 / PCC 7942 / FACHB-805) (Anacystis nidulans R2).